Consider the following 323-residue polypeptide: tRNA(Ile)-lysidine synthase (323 aa).

S33–S38 contacts ATP.

Belongs to the tRNA(Ile)-lysidine synthase family.

It localises to the cytoplasm. The enzyme catalyses cytidine(34) in tRNA(Ile2) + L-lysine + ATP = lysidine(34) in tRNA(Ile2) + AMP + diphosphate + H(+). Its function is as follows. Ligates lysine onto the cytidine present at position 34 of the AUA codon-specific tRNA(Ile) that contains the anticodon CAU, in an ATP-dependent manner. Cytidine is converted to lysidine, thus changing the amino acid specificity of the tRNA from methionine to isoleucine. In Mycobacterium bovis (strain ATCC BAA-935 / AF2122/97), this protein is tRNA(Ile)-lysidine synthase.